A 683-amino-acid polypeptide reads, in one-letter code: Acetyl-coenzyme A synthetase 2 (683 aa).

CoA-binding positions include 206 to 209 (RGGK) and T325. ATP is bound by residues 401-403 (GEP) and 425-430 (DTMWQT). 425 to 430 (DTMWQT) provides a ligand contact to AMP. K506 participates in a covalent cross-link: Glycyl lysine isopeptide (Lys-Gly) (interchain with G-Cter in ubiquitin). Residues D516 and R531 each coordinate ATP. Residues D516 and R531 each contribute to the AMP site. S539 serves as a coordination point for CoA. R542 is a binding site for ATP. Position 612 (R612) interacts with CoA. S679 carries the phosphoserine modification.

Belongs to the ATP-dependent AMP-binding enzyme family.

The protein localises to the cytoplasm. It localises to the nucleus. It carries out the reaction acetate + ATP + CoA = acetyl-CoA + AMP + diphosphate. The protein operates within carbohydrate metabolism; pyruvate metabolism. Functionally, catalyzes the production of acetyl-CoA. Provides the acetyl-CoA source for histone acetylation in the nucleus. 'Anaerobic' isozyme of acetyl-coenzyme A synthetase, which is required for growth on fermentable carbon sources such as glucose. May be involved in the PDH (pyruvate dehydrogenase complex) bypass. This Saccharomyces cerevisiae (strain ATCC 204508 / S288c) (Baker's yeast) protein is Acetyl-coenzyme A synthetase 2.